We begin with the raw amino-acid sequence, 88 residues long: Small ribosomal subunit protein bS20 (88 aa).

Basic residues predominate over residues 1-12 (MANHKSALKRAK). Residues 1 to 23 (MANHKSALKRAKQNTIKQMRNRS) are disordered.

The protein belongs to the bacterial ribosomal protein bS20 family.

In terms of biological role, binds directly to 16S ribosomal RNA. The sequence is that of Small ribosomal subunit protein bS20 from Desulfatibacillum aliphaticivorans.